The sequence spans 154 residues: Ubiquitin-conjugating enzyme E2 L5 (154 aa).

Residues 2–149 (AASRRLMKEL…AEEFTKKYGE (148 aa)) enclose the UBC core domain. Cys86 (glycyl thioester intermediate) is an active-site residue.

It belongs to the ubiquitin-conjugating enzyme family.

It catalyses the reaction S-ubiquitinyl-[E1 ubiquitin-activating enzyme]-L-cysteine + [E2 ubiquitin-conjugating enzyme]-L-cysteine = [E1 ubiquitin-activating enzyme]-L-cysteine + S-ubiquitinyl-[E2 ubiquitin-conjugating enzyme]-L-cysteine.. It functions in the pathway protein modification; protein ubiquitination. In terms of biological role, catalyzes the covalent attachment of ubiquitin to other proteins. This is Ubiquitin-conjugating enzyme E2 L5 from Homo sapiens (Human).